The chain runs to 938 residues: Isoleucine--tRNA ligase (938 aa).

The 'HIGH' region motif lies at 58–68 (PYANGSIHIGH). Residue E561 participates in L-isoleucyl-5'-AMP binding. Residues 602–606 (KMSKS) carry the 'KMSKS' region motif. K605 contributes to the ATP binding site. Positions 901, 904, 921, and 924 each coordinate Zn(2+).

This sequence belongs to the class-I aminoacyl-tRNA synthetase family. IleS type 1 subfamily. As to quaternary structure, monomer. The cofactor is Zn(2+).

The protein resides in the cytoplasm. The enzyme catalyses tRNA(Ile) + L-isoleucine + ATP = L-isoleucyl-tRNA(Ile) + AMP + diphosphate. In terms of biological role, catalyzes the attachment of isoleucine to tRNA(Ile). As IleRS can inadvertently accommodate and process structurally similar amino acids such as valine, to avoid such errors it has two additional distinct tRNA(Ile)-dependent editing activities. One activity is designated as 'pretransfer' editing and involves the hydrolysis of activated Val-AMP. The other activity is designated 'posttransfer' editing and involves deacylation of mischarged Val-tRNA(Ile). The sequence is that of Isoleucine--tRNA ligase from Klebsiella pneumoniae (strain 342).